A 792-amino-acid chain; its full sequence is Oxidoreductase cns1 (792 aa).

As to quaternary structure, interacts with cns2.

It is found in the lipid droplet. It functions in the pathway secondary metabolite biosynthesis. In terms of biological role, oxidoreductase; part of the gene cluster that mediates the biosynthesis of cordycepin (COR) and pentostatin (PTN), two adenosine analogs with related bioactivity profiles as both mimic adenosine and can inhibit some of the processes that are adenosine dependent. Within the pathway, cns1 catalyzes the last step by converting the cns2 product 2'-carbonyl-3'-deoxyadenosine (2'-C-3'-dA) into cordycepin (3'-deoxyadenosine). The first step of cordycepin biosynthesis involves hydroxyl phosphorylation of the 3'-OH position on adenosine to produce adenosine-3'-monophosphate (3'-AMP), catalyzed by kinase activity of cns3. Next, 3'-AMP is dephosphorylated to 2'-carbonyl-3'-deoxyadenosine by cns2, which is finally converted to cordycepin by the oxidoreductase cns1. Pentostatin production is mediated by the ATP phosphoribosyltransferase activity of cns3 on adenosine to inhibit the activity of adenosine deaminase (ADA) to prevent COR deamination to 3'-deoxyinosine (3'-dI). The polypeptide is Oxidoreductase cns1 (Cordyceps militaris (strain CM01) (Caterpillar fungus)).